Reading from the N-terminus, the 312-residue chain is Protein-methionine-sulfoxide reductase catalytic subunit MsrP (312 aa).

The segment at residues 1–45 (MPVYRPPRIAASEITPERFFLDRRSFLAAAGGLVLGGTGMAHAAA) is a signal peptide (tat-type signal). Mo-molybdopterin is bound by residues asparagine 69, 72–73 (YE), cysteine 126, threonine 161, asparagine 211, arginine 216, and 227–229 (GIK).

The protein belongs to the MsrP family. As to quaternary structure, heterodimer of a catalytic subunit (MsrP) and a heme-binding subunit (MsrQ). Mo-molybdopterin serves as cofactor. In terms of processing, predicted to be exported by the Tat system. The position of the signal peptide cleavage has not been experimentally proven.

The protein localises to the periplasm. It carries out the reaction L-methionyl-[protein] + a quinone + H2O = L-methionyl-(S)-S-oxide-[protein] + a quinol. The catalysed reaction is L-methionyl-[protein] + a quinone + H2O = L-methionyl-(R)-S-oxide-[protein] + a quinol. In terms of biological role, part of the MsrPQ system that repairs oxidized periplasmic proteins containing methionine sulfoxide residues (Met-O), using respiratory chain electrons. Thus protects these proteins from oxidative-stress damage caused by reactive species of oxygen and chlorine generated by the host defense mechanisms. MsrPQ is essential for the maintenance of envelope integrity under bleach stress, rescuing a wide series of structurally unrelated periplasmic proteins from methionine oxidation. The catalytic subunit MsrP is non-stereospecific, being able to reduce both (R-) and (S-) diastereoisomers of methionine sulfoxide. The polypeptide is Protein-methionine-sulfoxide reductase catalytic subunit MsrP (Sinorhizobium fredii (strain NBRC 101917 / NGR234)).